Consider the following 197-residue polypeptide: dTTP/UTP pyrophosphatase (197 aa).

The active-site Proton acceptor is the Asp70.

Belongs to the Maf family. YhdE subfamily. The cofactor is a divalent metal cation.

It localises to the cytoplasm. The catalysed reaction is dTTP + H2O = dTMP + diphosphate + H(+). The enzyme catalyses UTP + H2O = UMP + diphosphate + H(+). In terms of biological role, nucleoside triphosphate pyrophosphatase that hydrolyzes dTTP and UTP. May have a dual role in cell division arrest and in preventing the incorporation of modified nucleotides into cellular nucleic acids. In Methanosarcina mazei (strain ATCC BAA-159 / DSM 3647 / Goe1 / Go1 / JCM 11833 / OCM 88) (Methanosarcina frisia), this protein is dTTP/UTP pyrophosphatase.